A 138-amino-acid chain; its full sequence is Large ribosomal subunit protein uL16 (138 aa).

A compositionally biased stretch (basic residues) spans 1–14; sequence MLQPKRTKYRRTHR. A disordered region spans residues 1–24; it reads MLQPKRTKYRRTHRLQHDKGEAHT. A compositionally biased stretch (basic and acidic residues) spans 15-24; the sequence is LQHDKGEAHT.

Belongs to the universal ribosomal protein uL16 family. Part of the 50S ribosomal subunit.

In terms of biological role, binds 23S rRNA and is also seen to make contacts with the A and possibly P site tRNAs. This chain is Large ribosomal subunit protein uL16, found in Mycoplasma mobile (strain ATCC 43663 / 163K / NCTC 11711) (Mesomycoplasma mobile).